A 158-amino-acid polypeptide reads, in one-letter code: Kelch repeat protein B10 (158 aa).

Kelch repeat units lie at residues 25–76 and 77–129; these read TIFV…STFG and MLYF…KLNN.

It belongs to the poxviruses Kelch family.

This chain is Kelch repeat protein B10, found in Vaccinia virus (strain Ankara) (VACV).